The sequence spans 238 residues: Response regulator receiver protein Anae109_2439 (238 aa).

Response regulatory domains follow at residues 3 to 117 (RYLI…AAAR) and 121 to 228 (LVAV…ERLH). 4-aspartylphosphate occurs at positions 52 and 169.

Is diphosphorylated by GchK.

In terms of biological role, member of the two-component regulatory system GcHK/Anae109_2439. Is involved in a signal transduction system responding to oxygen availability. This Anaeromyxobacter sp. (strain Fw109-5) protein is Response regulator receiver protein Anae109_2439.